We begin with the raw amino-acid sequence, 224 residues long: Ribose-5-phosphate isomerase A 1 (224 aa).

Substrate-binding positions include Ser-29–Thr-32, Asp-85–Asp-88, and Lys-98–Gly-101. Residue Glu-107 is the Proton acceptor of the active site. Substrate is bound at residue Lys-125.

The protein belongs to the ribose 5-phosphate isomerase family. In terms of assembly, homodimer.

The enzyme catalyses aldehydo-D-ribose 5-phosphate = D-ribulose 5-phosphate. It functions in the pathway carbohydrate degradation; pentose phosphate pathway; D-ribose 5-phosphate from D-ribulose 5-phosphate (non-oxidative stage): step 1/1. Functionally, catalyzes the reversible conversion of ribose-5-phosphate to ribulose 5-phosphate. This chain is Ribose-5-phosphate isomerase A 1, found in Oceanobacillus iheyensis (strain DSM 14371 / CIP 107618 / JCM 11309 / KCTC 3954 / HTE831).